We begin with the raw amino-acid sequence, 266 residues long: Tryptophan synthase alpha chain (266 aa).

Catalysis depends on proton acceptor residues glutamate 46 and aspartate 57.

The protein belongs to the TrpA family. Tetramer of two alpha and two beta chains.

It carries out the reaction (1S,2R)-1-C-(indol-3-yl)glycerol 3-phosphate + L-serine = D-glyceraldehyde 3-phosphate + L-tryptophan + H2O. It functions in the pathway amino-acid biosynthesis; L-tryptophan biosynthesis; L-tryptophan from chorismate: step 5/5. The alpha subunit is responsible for the aldol cleavage of indoleglycerol phosphate to indole and glyceraldehyde 3-phosphate. The polypeptide is Tryptophan synthase alpha chain (Lacticaseibacillus casei (Lactobacillus casei)).